We begin with the raw amino-acid sequence, 323 residues long: ATP synthase gamma chain (323 aa).

Belongs to the ATPase gamma chain family. In terms of assembly, F-type ATPases have 2 components, CF(1) - the catalytic core - and CF(0) - the membrane proton channel. CF(1) has five subunits: alpha(3), beta(3), gamma(1), delta(1), epsilon(1). CF(0) has three main subunits: a, b and c.

The protein localises to the cell inner membrane. In terms of biological role, produces ATP from ADP in the presence of a proton gradient across the membrane. The gamma chain is believed to be important in regulating ATPase activity and the flow of protons through the CF(0) complex. The protein is ATP synthase gamma chain of Rickettsia rickettsii (strain Iowa).